The chain runs to 423 residues: MLDIKKIRADFDGVAAKLATRGVEKEKLEKLHDLDIKRRELIVKSEALKAERNSVSDEISQVKRAKGDASTQIAAMQKVSAEIKAIDAELAEIEENLNEIIIMLPNLPHESTPIGADEDDNVEVRRVGQTPTFNFEPKAHWDLGEDLGILDWERGGKVTGSRFLFYKGAGARLERALYNFMLDEHGKEGYTEMITPYMVNQESMFGTGQYPKFKEDTFELKDDRGFVLIPTAEVPLTNYYRGEILDGSELPIKFTAMSPSFRSEAGSAGRDTRGLIRLHQFHKVEMVKFAKPDQSYDELEKMTANAENILQKLGLAYRVVALSTGDMGFSAAKTYDLEVWIPAQNTYREISSCSNCEDFQARRAQIRYRDEDGKVQLLHTLNGSGLAVGRTVAAILENYQNEDGSITVPEILRPYMGGLEVIK.

231–233 serves as a coordination point for L-serine; it reads TAE. Residue 262–264 coordinates ATP; sequence RSE. An L-serine-binding site is contributed by E285. Residue 349 to 352 coordinates ATP; the sequence is EISS. S384 contributes to the L-serine binding site.

It belongs to the class-II aminoacyl-tRNA synthetase family. Type-1 seryl-tRNA synthetase subfamily. Homodimer. The tRNA molecule binds across the dimer.

It is found in the cytoplasm. The enzyme catalyses tRNA(Ser) + L-serine + ATP = L-seryl-tRNA(Ser) + AMP + diphosphate + H(+). It carries out the reaction tRNA(Sec) + L-serine + ATP = L-seryl-tRNA(Sec) + AMP + diphosphate + H(+). The protein operates within aminoacyl-tRNA biosynthesis; selenocysteinyl-tRNA(Sec) biosynthesis; L-seryl-tRNA(Sec) from L-serine and tRNA(Sec): step 1/1. Catalyzes the attachment of serine to tRNA(Ser). Is also able to aminoacylate tRNA(Sec) with serine, to form the misacylated tRNA L-seryl-tRNA(Sec), which will be further converted into selenocysteinyl-tRNA(Sec). This is Serine--tRNA ligase from Lactococcus lactis subsp. cremoris (strain MG1363).